Reading from the N-terminus, the 559-residue chain is Sporulation protein kinase mde3 (559 aa).

The region spanning 21-323 (YLVKQKLGDG…TAKYCKEVFF (303 aa)) is the Protein kinase domain. ATP is bound by residues 27–35 (LGDGSFGTV) and lysine 53. The Proton acceptor role is filled by aspartate 150.

Belongs to the protein kinase superfamily. Ser/Thr protein kinase family.

The enzyme catalyses L-seryl-[protein] + ATP = O-phospho-L-seryl-[protein] + ADP + H(+). It catalyses the reaction L-threonyl-[protein] + ATP = O-phospho-L-threonyl-[protein] + ADP + H(+). Functionally, protein kinase which is essential for spore formation. The polypeptide is Sporulation protein kinase mde3 (mde3) (Schizosaccharomyces pombe (strain 972 / ATCC 24843) (Fission yeast)).